An 881-amino-acid chain; its full sequence is Envelope glycoprotein gp160 (881 aa).

The signal sequence occupies residues M1–G19. Over I20–G696 the chain is Extracellular. N-linked (GlcNAc...) asparagine; by host glycosylation is present at N37. C44 and C57 are disulfide-bonded. N-linked (GlcNAc...) asparagine; by host glycans are attached at residues N70, N114, N148, N158, N186, N200, N204, N214, N246, N249, N280, N286, N297, N308, N318, N373, and N379. 5 disulfide bridges follow: C101-C222, C108-C213, C113-C170, C235-C265, and C245-C257. A V1 region spans residues C113–S169. Positions C170–C213 are V2. Residues C313–W345 form a V3 region. Cysteines 313 and 346 form a disulfide. Cystine bridges form between C397/C461 and C404/C434. The tract at residues C404 to C434 is V4. N462 and N478 each carry an N-linked (GlcNAc...) asparagine; by host glycan. The interval G477–M484 is V5. The segment at G528 to A548 is fusion peptide. Residues L591–Q607 are immunosuppression. Residues N627, N636, and N652 are each glycosylated (N-linked (GlcNAc...) asparagine; by host). Residues N636–M668 adopt a coiled-coil conformation. Positions K673–Q694 are MPER; binding to GalCer. A helical transmembrane segment spans residues I697–A717. The Cytoplasmic portion of the chain corresponds to K718–L881. The YXXV motif; contains endocytosis signal signature appears at Y723–V726. A disordered region spans residues T737–N761. C789 is lipidated: S-palmitoyl cysteine; by host. The Di-leucine internalization motif signature appears at L880–L881.

In terms of assembly, the mature envelope protein (Env) consists of a homotrimer of non-covalently associated gp120-gp41 heterodimers. The resulting complex protrudes from the virus surface as a spike. Interacts with host CD4 and CCR5. Gp120 also interacts with the C-type lectins CD209/DC-SIGN and CLEC4M/DC-SIGNR (collectively referred to as DC-SIGN(R)). The mature envelope protein (Env) consists of a homotrimer of non-covalently associated gp120-gp41 heterodimers. The resulting complex protrudes from the virus surface as a spike. In terms of processing, specific enzymatic cleavages in vivo yield mature proteins. Envelope glycoproteins are synthesized as an inactive precursor that is heavily N-glycosylated and processed likely by host cell furin in the Golgi to yield the mature SU and TM proteins. The cleavage site between SU and TM requires the minimal sequence [KR]-X-[KR]-R. Palmitoylation of the transmembrane protein and of Env polyprotein (prior to its proteolytic cleavage) is essential for their association with host cell membrane lipid rafts. Palmitoylation is therefore required for envelope trafficking to classical lipid rafts, but not for viral replication.

The protein resides in the virion membrane. The protein localises to the host cell membrane. It localises to the host endosome membrane. In terms of biological role, the surface protein gp120 (SU) attaches the virus to the host lymphoid cell by binding to the primary receptor CD4. This interaction induces a structural rearrangement creating a high affinity binding site for a chemokine coreceptor like CCR5. This peculiar 2 stage receptor-interaction strategy allows gp120 to maintain the highly conserved coreceptor-binding site in a cryptic conformation, protected from neutralizing antibodies. These changes are transmitted to the transmembrane protein gp41 and are thought to activate its fusogenic potential by unmasking its fusion peptide. Functionally, surface protein gp120 (SU) may target the virus to gut-associated lymphoid tissue (GALT) by binding host ITGA4/ITGB7 (alpha-4/beta-7 integrins), a complex that mediates T-cell migration to the GALT. Interaction between gp120 and ITGA4/ITGB7 would allow the virus to enter GALT early in the infection, infecting and killing most of GALT's resting CD4+ T-cells. This T-cell depletion is believed to be the major insult to the host immune system leading to AIDS. Its function is as follows. The surface protein gp120 is a ligand for CD209/DC-SIGN and CLEC4M/DC-SIGNR, which are respectively found on dendritic cells (DCs), and on endothelial cells of liver sinusoids and lymph node sinuses. These interactions allow capture of viral particles at mucosal surfaces by these cells and subsequent transmission to permissive cells. DCs are professional antigen presenting cells, critical for host immunity by inducing specific immune responses against a broad variety of pathogens. They act as sentinels in various tissues where they take up antigen, process it, and present it to T-cells following migration to lymphoid organs. SIV subverts the migration properties of dendritic cells to gain access to CD4+ T-cells in lymph nodes. Virus transmission to permissive T-cells occurs either in trans (without DCs infection, through viral capture and transmission), or in cis (following DCs productive infection, through the usual CD4-gp120 interaction), thereby inducing a robust infection. In trans infection, bound virions remain infectious over days and it is proposed that they are not degraded, but protected in non-lysosomal acidic organelles within the DCs close to the cell membrane thus contributing to the viral infectious potential during DCs' migration from the periphery to the lymphoid tissues. On arrival at lymphoid tissues, intact virions recycle back to DCs' cell surface allowing virus transmission to CD4+ T-cells. Virion capture also seems to lead to MHC-II-restricted viral antigen presentation, and probably to the activation of SIV-specific CD4+ cells. The transmembrane protein gp41 (TM) acts as a class I viral fusion protein. Under the current model, the protein has at least 3 conformational states: pre-fusion native state, pre-hairpin intermediate state, and post-fusion hairpin state. During fusion of viral and target intracellular membranes, the coiled coil regions (heptad repeats) assume a trimer-of-hairpins structure, positioning the fusion peptide in close proximity to the C-terminal region of the ectodomain. The formation of this structure appears to drive apposition and subsequent fusion of viral and target cell membranes. Complete fusion occurs in host cell endosomes. The virus undergoes clathrin-dependent internalization long before endosomal fusion, thus minimizing the surface exposure of conserved viral epitopes during fusion and reducing the efficacy of inhibitors targeting these epitopes. Membranes fusion leads to delivery of the nucleocapsid into the cytoplasm. In terms of biological role, the envelope glycoprotein gp160 precursor down-modulates cell surface CD4 antigen by interacting with it in the endoplasmic reticulum and blocking its transport to the cell surface. Functionally, the gp120-gp41 heterodimer allows rapid transcytosis of the virus through CD4 negative cells such as simple epithelial monolayers of the intestinal, rectal and endocervical epithelial barriers. Both gp120 and gp41 specifically recognize glycosphingolipids galactosyl-ceramide (GalCer) or 3' sulfo-galactosyl-ceramide (GalS) present in the lipid rafts structures of epithelial cells. Binding to these alternative receptors allows the rapid transcytosis of the virus through the epithelial cells. This transcytotic vesicle-mediated transport of virions from the apical side to the basolateral side of the epithelial cells does not involve infection of the cells themselves. This is Envelope glycoprotein gp160 (env) from Cercopithecidae (Old World monkeys).